A 403-amino-acid chain; its full sequence is Spindle assembly abnormal protein 5 (403 aa).

2 disordered regions span residues 24–79 (PRVF…AHPA) and 96–127 (TVEG…ENWR). A compositionally biased stretch (basic and acidic residues) spans 116–127 (RMTEENQEENWR). Positions 128–163 (DVMKNEFEVMRKEMQEEATKKQEELNAQNLNKMQEM) form a coiled coil. Disordered stretches follow at residues 174-205 (AKPS…ANKI), 255-276 (AYSP…SSGN), 302-325 (RQWT…PDPQ), and 355-403 (YHVE…SRRK). Basic and acidic residues predominate over residues 177–194 (SAEESQDREKENWYEQSR). Residues 305–321 (TSERNDNRTHDNYRPYE) show a composition bias toward basic and acidic residues. Acidic residues predominate over residues 360-369 (VPEYEEEETE). Basic and acidic residues predominate over residues 379–403 (YHEPMETESAAERERRIREKYSRRK).

In terms of assembly, interacts with sas-6 via its coiled coil domain.

The protein localises to the cytoplasm. It localises to the cytoskeleton. It is found in the microtubule organizing center. The protein resides in the centrosome. Its subcellular location is the centriole. Functionally, required for centrosome duplication. Essential for daughter-centriole formation. Requires both maternal and partenal expression, suggesting that it regulates centriole duplication during both spermatogenesis and early embryogenesis. The sequence is that of Spindle assembly abnormal protein 5 (sas-5) from Caenorhabditis briggsae.